Reading from the N-terminus, the 1086-residue chain is Rh5-interacting protein (1086 aa).

An N-terminal signal peptide occupies residues 1–19; sequence MFRIFFTLLIIILIKKTSA. N-linked (GlcNAc...) asparagine glycans are attached at residues Asn103, Asn144, Asn228, Asn303, Asn334, Asn480, Asn498, Asn506, Asn526, and Asn646. EGF-like domains lie at 287–321 and 325–362; these read RCTQ…NNCE and LCTV…NKCY. 7 EGF-like domains span residues 636-675, 679-715, 719-753, 818-854, 858-897, 901-938, and 942-979; these read SCSN…KLCE, DCES…GKCV, KCDL…GVCI, YCKD…GECI, SCLI…GKCV, KCVH…GVCL, and PCLK…DSCV. N-linked (GlcNAc...) asparagine glycosylation is found at Asn964 and Asn1021.

As to quaternary structure, component of the PfRH5 adhesion complex composed of 1 copy of CyRPA, RH5 and RIPR; the complex is formed during merozoite invasion of host erythrocytes specifically at the interface between the parasite and host membranes. Within the complex, interacts with CyRPA. CyRPA recruitment of RIPR to RH5-P113-BSG leads to the formation of the PfRH5 adhesion complex which probably in turn releases RH5 from P113 while maintaining the interaction of the PfRH5 adhesion complex with BSG. In terms of processing, proteolytically cleaved into two chains of 125kDa and 65kDa which remain associated. The cleavage occurs at the schizont stage prior to the release of merozoites. Contains disulfide bonds.

The protein resides in the secreted. Its subcellular location is the cytoplasmic vesicle. The protein localises to the secretory vesicle. It is found in the microneme lumen. It localises to the cell membrane. The protein resides in the host cell membrane. In terms of biological role, essential for the invasion of host erythrocytes by blood stage merozoites. As part of the PfRH5 adhesion complex, facilitates the interaction of RH5 and human BSG required for the Ca(2+) release into the erythrocyte. This is Rh5-interacting protein (RIPR) from Plasmodium falciparum (isolate 3D7).